The primary structure comprises 241 residues: Chaperone protein FimC (241 aa).

An N-terminal signal peptide occupies residues methionine 1–alanine 36.

This sequence belongs to the periplasmic pilus chaperone family.

The protein resides in the periplasm. Functionally, required for the biogenesis of type 1 fimbriae. Binds and interact with FimH. The protein is Chaperone protein FimC (fimC) of Escherichia coli (strain K12).